A 339-amino-acid chain; its full sequence is D-erythrose-4-phosphate dehydrogenase (339 aa).

Arg-12 to Ile-13 contacts NAD(+). Residues Ser-154–Thr-156, Arg-200, Thr-213–Lys-214, and Arg-236 each bind substrate. The Nucleophile role is filled by Cys-155. Asn-318 contributes to the NAD(+) binding site.

Belongs to the glyceraldehyde-3-phosphate dehydrogenase family. Epd subfamily. Homotetramer.

Its subcellular location is the cytoplasm. It carries out the reaction D-erythrose 4-phosphate + NAD(+) + H2O = 4-phospho-D-erythronate + NADH + 2 H(+). Its pathway is cofactor biosynthesis; pyridoxine 5'-phosphate biosynthesis; pyridoxine 5'-phosphate from D-erythrose 4-phosphate: step 1/5. Catalyzes the NAD-dependent conversion of D-erythrose 4-phosphate to 4-phosphoerythronate. The chain is D-erythrose-4-phosphate dehydrogenase from Enterobacter sp. (strain 638).